A 149-amino-acid chain; its full sequence is Transcriptional repressor NrdR (149 aa).

A zinc finger spans residues cysteine 3–cysteine 34. An ATP-cone domain is found at proline 49 to glutamate 139.

The protein belongs to the NrdR family. Zn(2+) serves as cofactor.

Functionally, negatively regulates transcription of bacterial ribonucleotide reductase nrd genes and operons by binding to NrdR-boxes. The chain is Transcriptional repressor NrdR from Actinobacillus pleuropneumoniae serotype 5b (strain L20).